Here is a 226-residue protein sequence, read N- to C-terminus: Transcription factor bHLH115 (226 aa).

The bHLH domain occupies 66–117; that stretch reads TGSNSKACREKQRRDRLNDKFTELSSVLEPGRTPKTDKVAIINDAIRMVNQA.

As to quaternary structure, homodimer. Interacts with BTS and BHLH47/PYE.

It is found in the nucleus. In Arabidopsis thaliana (Mouse-ear cress), this protein is Transcription factor bHLH115 (BHLH115).